The primary structure comprises 841 residues: Nuclear RNA export factor 2 (841 aa).

Positions 1-285 (MPNQMRVLDF…NFELVDGKPF (285 aa)) are RNA-binding unit probably involved in Piwi-dependent recruitment and single-stranded RNA-PPNP complex formation. 3 LRR repeats span residues 200 to 221 (RLNG…TLLA), 224 to 245 (DYAL…CRAL), and 249 to 270 (RARE…PANI). The segment at 286–553 (NMLHKIFSPL…EYVRAVKEVF (268 aa)) is necessary for silencing function. An RRM domain is found at 325 to 408 (WHAFMIPDPS…IFRYYLRMNV (84 aa)). LRR repeat units lie at residues 475–496 (TCSE…HVLG), 500–521 (CLRA…HSLG), and 524–545 (PLKS…PSEY). The NTF2 domain occupies 585 to 758 (LVGAFLENYL…LKIANERLHI (174 aa)). The region spanning 788–841 (DVKDHKLLLFQEVTGLISTWVTSIVEEADWDFERALKLFIQKNADHEIPDLAFA) is the TAP-C domain.

Belongs to the NXF family. In the ovaries, part of a complex composed of at least Panx, nxf2, piwi and Nxt1. The complex is knowns as Panx-induced cotranscriptional silencing (PICTS) complex, Panx-nxf2-dependent TAP/p15 silencing (Pandas complex), SFiNX (silencing factor interacting nuclear export variant) or piwi-Panx-nxf2-p15 (PPNP) complex. Interacts (via TAP-C domain) with Panx (via NIR region); the interaction is direct. Interacts (via NTF2 domain) with Nxt1; the interaction is direct and prevents Nxt1 binding to nucleoporins. Interacts with sbr/Nxf1. Expressed in female gonads (at protein level). Expressed ubiquitously.

It is found in the cytoplasm. Its subcellular location is the nucleus. It localises to the nucleoplasm. In terms of biological role, may be involved in the export of mRNA from the nucleus to the cytoplasm. In the ovaries, forms a complex with nxf2, piwi and Nxt1 which acts as effectors of cotranscriptional transposon silencing. On recruitment to a target transcript, interacts with single stranded RNA, thereby anchoring the complex via the nascent target transcript to chromatin and allowing Panx to recruit silencing effectors to establishing repressive heterochromatin at transposon loci. Does not affect piRNA biogenesis. The interaction with Panx stabilizes the nuclear protein complex. Does not bind nucleoporins, but regulates sbr/Nxf1 binding to nucleoporins and, indirectly, transposon exports. In Drosophila melanogaster (Fruit fly), this protein is Nuclear RNA export factor 2 (nxf2).